The sequence spans 207 residues: Ribonuclease HII (207 aa).

An RNase H type-2 domain is found at 18 to 207; sequence TYLSGSDEAG…PIKKISKETS (190 aa). Positions 24, 25, and 116 each coordinate a divalent metal cation.

Belongs to the RNase HII family. The cofactor is Mn(2+). Requires Mg(2+) as cofactor.

The protein resides in the cytoplasm. It carries out the reaction Endonucleolytic cleavage to 5'-phosphomonoester.. Functionally, endonuclease that specifically degrades the RNA of RNA-DNA hybrids. This is Ribonuclease HII from Mycoplasma mycoides subsp. mycoides SC (strain CCUG 32753 / NCTC 10114 / PG1).